The following is a 227-amino-acid chain: PKHD-type hydroxylase Bcep18194_B0892 (227 aa).

The region spanning 78-178 (KVFPPLFNRY…RVASFFWIQS (101 aa)) is the Fe2OG dioxygenase domain. Fe cation is bound by residues H96, D98, and H159. Position 169 (R169) interacts with 2-oxoglutarate.

It depends on Fe(2+) as a cofactor. L-ascorbate serves as cofactor.

This is PKHD-type hydroxylase Bcep18194_B0892 from Burkholderia lata (strain ATCC 17760 / DSM 23089 / LMG 22485 / NCIMB 9086 / R18194 / 383).